The chain runs to 473 residues: Suppressor of SWI4 1 homolog (473 aa).

The 264-residue stretch at 29–292 (PHSFVFTRGC…LIKVQEGVGE (264 aa)) folds into the Brix domain. Residues Ser-238 and Ser-240 each carry the phosphoserine modification. Residues 323-473 (AQRQAQQAQN…GRGRPRKRVA (151 aa)) form a disordered region. Residues 324 to 334 (QRQAQQAQNVQ) show a composition bias toward low complexity. The span at 335–360 (RKQEQREAHRKKSLEGMKKARVRGGD) shows a compositional bias: basic and acidic residues. Residues 376–388 (GEDDDEQEDDDIE) are compositionally biased toward acidic residues. A compositionally biased stretch (basic residues) spans 407 to 421 (KRKRLAKSPGQKRKR). Positions 422–444 (REMDRGRGRLCDQKFPKPKDKSH) are enriched in basic and acidic residues. Residue Lys-438 is modified to N6-acetyllysine. Basic residues predominate over residues 464-473 (GRGRPRKRVA).

It localises to the nucleus. The protein localises to the nucleolus. May have a role in cell growth. The protein is Suppressor of SWI4 1 homolog (PPAN) of Pongo abelii (Sumatran orangutan).